The sequence spans 450 residues: Casein kinase 1-like protein 1 (450 aa).

The 270-residue stretch at Phe-9–Ile-278 folds into the Protein kinase domain. Residues Ile-15–Ile-23 and Lys-38 each bind ATP. The active-site Proton acceptor is the Asp-128. The disordered stretch occupies residues Ala-311 to His-450. Positions Tyr-328 to Arg-342 are enriched in basic and acidic residues. Over residues Leu-349–Arg-365 the composition is skewed to polar residues. Low complexity predominate over residues Ser-371–Ser-382.

It belongs to the protein kinase superfamily. CK1 Ser/Thr protein kinase family. Casein kinase I subfamily. Monomer. Autophosphorylated. Expressed in flowers.

It localises to the cytoplasm. Its subcellular location is the cell junction. It is found in the plasmodesma. The catalysed reaction is L-seryl-[protein] + ATP = O-phospho-L-seryl-[protein] + ADP + H(+). The enzyme catalyses L-threonyl-[protein] + ATP = O-phospho-L-threonyl-[protein] + ADP + H(+). Functionally, casein kinases are operationally defined by their preferential utilization of acidic proteins such as caseins as substrates. It can phosphorylate a large number of proteins. This chain is Casein kinase 1-like protein 1, found in Arabidopsis thaliana (Mouse-ear cress).